The primary structure comprises 322 residues: tRNA dimethylallyltransferase (322 aa).

18-25 serves as a coordination point for ATP; the sequence is GPTASGKS. A substrate-binding site is contributed by 20-25; sequence TASGKS. Interaction with substrate tRNA regions lie at residues 43 to 46 and 167 to 171; these read DSRQ and QRLVR.

This sequence belongs to the IPP transferase family. In terms of assembly, monomer. Mg(2+) is required as a cofactor.

It catalyses the reaction adenosine(37) in tRNA + dimethylallyl diphosphate = N(6)-dimethylallyladenosine(37) in tRNA + diphosphate. In terms of biological role, catalyzes the transfer of a dimethylallyl group onto the adenine at position 37 in tRNAs that read codons beginning with uridine, leading to the formation of N6-(dimethylallyl)adenosine (i(6)A). The protein is tRNA dimethylallyltransferase of Chlorobium phaeobacteroides (strain BS1).